A 545-amino-acid polypeptide reads, in one-letter code: Hydroxylamine reductase (545 aa).

Positions 3, 6, 15, and 21 each coordinate [4Fe-4S] cluster. Hybrid [4Fe-2O-2S] cluster is bound by residues His-241, Glu-265, Cys-309, Cys-396, Cys-424, Cys-449, Glu-483, and Lys-485. Cys-396 bears the Cysteine persulfide mark.

Belongs to the HCP family. [4Fe-4S] cluster serves as cofactor. Hybrid [4Fe-2O-2S] cluster is required as a cofactor.

Its subcellular location is the cytoplasm. The enzyme catalyses A + NH4(+) + H2O = hydroxylamine + AH2 + H(+). Its function is as follows. Catalyzes the reduction of hydroxylamine to form NH(3) and H(2)O. This is Hydroxylamine reductase from Zymomonas mobilis subsp. mobilis (strain ATCC 31821 / ZM4 / CP4).